A 177-amino-acid polypeptide reads, in one-letter code: UBA-like domain-containing protein 1 (177 aa).

The tract at residues 89-177 (ESFHSGGSGS…RAHPAMEAER (89 aa)) is disordered. Positions 112 to 138 (PHAATSSSAASSWPTAASPPGGPQHHQ) are enriched in low complexity. Positions 139-151 (PQPPLWTPTPPSP) are enriched in pro residues. Residues 167 to 177 (PRAHPAMEAER) are compositionally biased toward basic and acidic residues.

The protein belongs to the UBALD family.

In Homo sapiens (Human), this protein is UBA-like domain-containing protein 1 (UBALD1).